The primary structure comprises 616 residues: Glucoamylase P (616 aa).

Positions 1–29 are cleaved as a signal peptide; sequence MRLLPSSCAGALSLLCSLAIAAPTELKAR. Position 149 (W149) interacts with substrate. The N-linked (GlcNAc...) asparagine glycan is linked to N200. Catalysis depends on D205, which acts as the Proton acceptor. Catalysis depends on E208, which acts as the Proton donor. N-linked (GlcNAc...) asparagine glycosylation is present at N427. The 108-residue stretch at 501–608 folds into the CBM20 domain; the sequence is VTSSCQVSIT…AVTTDDAWMG (108 aa).

Belongs to the glycosyl hydrolase 15 family.

It is found in the secreted. It carries out the reaction Hydrolysis of terminal (1-&gt;4)-linked alpha-D-glucose residues successively from non-reducing ends of the chains with release of beta-D-glucose.. The sequence is that of Glucoamylase P (GAMP) from Amorphotheca resinae (Creosote fungus).